The chain runs to 749 residues: Soluble starch synthase 2-1, chloroplastic/amyloplastic (749 aa).

Residues methionine 1 to threonine 44 constitute a chloroplast transit peptide. Residue lysine 272 coordinates ADP-alpha-D-glucose.

It belongs to the glycosyltransferase 1 family. Bacterial/plant glycogen synthase subfamily. As to expression, expressed in endosperm, leaves, and weakly in roots.

Its subcellular location is the plastid. It localises to the amyloplast. The protein resides in the chloroplast. The catalysed reaction is [(1-&gt;4)-alpha-D-glucosyl](n) + ADP-alpha-D-glucose = [(1-&gt;4)-alpha-D-glucosyl](n+1) + ADP + H(+). Its pathway is glycan biosynthesis; starch biosynthesis. Functionally, may be involved in starch synthesis in endosperm amyloplasts and contribute to the deposition of transient starch in chloroplasts of leaves. The polypeptide is Soluble starch synthase 2-1, chloroplastic/amyloplastic (SSII-1) (Oryza sativa subsp. japonica (Rice)).